Reading from the N-terminus, the 360-residue chain is Threonine synthase (360 aa).

K69 carries the N6-(pyridoxal phosphate)lysine modification. Residues N95, 196 to 200, and T326 contribute to the pyridoxal 5'-phosphate site; that span reads GNAGN.

This sequence belongs to the threonine synthase family. Homodimer. It depends on pyridoxal 5'-phosphate as a cofactor.

It catalyses the reaction O-phospho-L-homoserine + H2O = L-threonine + phosphate. Its pathway is amino-acid biosynthesis; L-threonine biosynthesis; L-threonine from L-aspartate: step 5/5. Catalyzes the gamma-elimination of phosphate from L-phosphohomoserine and the beta-addition of water to produce L-threonine. This Mycobacterium bovis (strain ATCC BAA-935 / AF2122/97) protein is Threonine synthase (thrC).